Here is a 345-residue protein sequence, read N- to C-terminus: S-adenosylmethionine:tRNA ribosyltransferase-isomerase (345 aa).

The protein belongs to the QueA family. Monomer.

The protein localises to the cytoplasm. It carries out the reaction 7-aminomethyl-7-carbaguanosine(34) in tRNA + S-adenosyl-L-methionine = epoxyqueuosine(34) in tRNA + adenine + L-methionine + 2 H(+). It participates in tRNA modification; tRNA-queuosine biosynthesis. Functionally, transfers and isomerizes the ribose moiety from AdoMet to the 7-aminomethyl group of 7-deazaguanine (preQ1-tRNA) to give epoxyqueuosine (oQ-tRNA). This is S-adenosylmethionine:tRNA ribosyltransferase-isomerase from Shewanella baltica (strain OS155 / ATCC BAA-1091).